The primary structure comprises 106 residues: UPF0145 protein CPE0882 (106 aa).

This sequence belongs to the UPF0145 family.

The chain is UPF0145 protein CPE0882 from Clostridium perfringens (strain 13 / Type A).